We begin with the raw amino-acid sequence, 90 residues long: Small ribosomal subunit protein uS15c (90 aa).

It belongs to the universal ribosomal protein uS15 family. As to quaternary structure, part of the 30S ribosomal subunit.

The protein localises to the plastid. Its subcellular location is the chloroplast. The polypeptide is Small ribosomal subunit protein uS15c (rps15) (Gossypium barbadense (Sea Island cotton)).